A 376-amino-acid chain; its full sequence is Succinyl-diaminopimelate desuccinylase (376 aa).

A Zn(2+)-binding site is contributed by H68. D70 is an active-site residue. D101 contacts Zn(2+). The active-site Proton acceptor is the E135. E136, E164, and H349 together coordinate Zn(2+).

It belongs to the peptidase M20A family. DapE subfamily. As to quaternary structure, homodimer. The cofactor is Zn(2+). Co(2+) serves as cofactor.

It catalyses the reaction N-succinyl-(2S,6S)-2,6-diaminopimelate + H2O = (2S,6S)-2,6-diaminopimelate + succinate. Its pathway is amino-acid biosynthesis; L-lysine biosynthesis via DAP pathway; LL-2,6-diaminopimelate from (S)-tetrahydrodipicolinate (succinylase route): step 3/3. Its function is as follows. Catalyzes the hydrolysis of N-succinyl-L,L-diaminopimelic acid (SDAP), forming succinate and LL-2,6-diaminopimelate (DAP), an intermediate involved in the bacterial biosynthesis of lysine and meso-diaminopimelic acid, an essential component of bacterial cell walls. This chain is Succinyl-diaminopimelate desuccinylase, found in Marinobacter nauticus (strain ATCC 700491 / DSM 11845 / VT8) (Marinobacter aquaeolei).